The primary structure comprises 296 residues: Porphobilinogen deaminase (296 aa).

Residue C235 is modified to S-(dipyrrolylmethanemethyl)cysteine.

The protein belongs to the HMBS family. Monomer. Dipyrromethane is required as a cofactor.

The catalysed reaction is 4 porphobilinogen + H2O = hydroxymethylbilane + 4 NH4(+). Its pathway is porphyrin-containing compound metabolism; protoporphyrin-IX biosynthesis; coproporphyrinogen-III from 5-aminolevulinate: step 2/4. Functionally, tetrapolymerization of the monopyrrole PBG into the hydroxymethylbilane pre-uroporphyrinogen in several discrete steps. In Alkaliphilus oremlandii (strain OhILAs) (Clostridium oremlandii (strain OhILAs)), this protein is Porphobilinogen deaminase.